We begin with the raw amino-acid sequence, 494 residues long: UPF0371 protein spyM18_1356 (494 aa).

It belongs to the UPF0371 family.

The protein is UPF0371 protein spyM18_1356 of Streptococcus pyogenes serotype M18 (strain MGAS8232).